The primary structure comprises 273 residues: 4-hydroxy-tetrahydrodipicolinate reductase (273 aa).

NAD(+) is bound by residues 10–15, Glu36, 100–102, and 124–127; these read GAGGRM, GTT, and SGNM. His157 functions as the Proton donor/acceptor in the catalytic mechanism. His158 lines the (S)-2,3,4,5-tetrahydrodipicolinate pocket. Lys161 (proton donor) is an active-site residue. 167–168 contributes to the (S)-2,3,4,5-tetrahydrodipicolinate binding site; sequence GT.

This sequence belongs to the DapB family.

The protein resides in the cytoplasm. It catalyses the reaction (S)-2,3,4,5-tetrahydrodipicolinate + NAD(+) + H2O = (2S,4S)-4-hydroxy-2,3,4,5-tetrahydrodipicolinate + NADH + H(+). It carries out the reaction (S)-2,3,4,5-tetrahydrodipicolinate + NADP(+) + H2O = (2S,4S)-4-hydroxy-2,3,4,5-tetrahydrodipicolinate + NADPH + H(+). The protein operates within amino-acid biosynthesis; L-lysine biosynthesis via DAP pathway; (S)-tetrahydrodipicolinate from L-aspartate: step 4/4. Catalyzes the conversion of 4-hydroxy-tetrahydrodipicolinate (HTPA) to tetrahydrodipicolinate. The chain is 4-hydroxy-tetrahydrodipicolinate reductase from Rhodopseudomonas palustris (strain BisA53).